Reading from the N-terminus, the 269-residue chain is Ribonuclease HII (269 aa).

Residues 79 to 269 (TYLAGADEVG…SFLKNILNTF (191 aa)) enclose the RNase H type-2 domain. D85, E86, and D182 together coordinate a divalent metal cation.

Belongs to the RNase HII family. It depends on Mn(2+) as a cofactor. Mg(2+) serves as cofactor.

It localises to the cytoplasm. The catalysed reaction is Endonucleolytic cleavage to 5'-phosphomonoester.. Endonuclease that specifically degrades the RNA of RNA-DNA hybrids. This chain is Ribonuclease HII, found in Clostridium novyi (strain NT).